The primary structure comprises 239 residues: Sugar fermentation stimulation protein homolog (239 aa).

It belongs to the SfsA family.

The chain is Sugar fermentation stimulation protein homolog from Synechococcus sp. (strain JA-3-3Ab) (Cyanobacteria bacterium Yellowstone A-Prime).